Reading from the N-terminus, the 65-residue chain is Large ribosomal subunit protein bL35 (65 aa).

Belongs to the bacterial ribosomal protein bL35 family.

The chain is Large ribosomal subunit protein bL35 from Edwardsiella ictaluri (strain 93-146).